The primary structure comprises 166 residues: SPbeta prophage-derived uncharacterized protein YomO (166 aa).

The protein is SPbeta prophage-derived uncharacterized protein YomO (yomO) of Bacillus subtilis (strain 168).